We begin with the raw amino-acid sequence, 196 residues long: Holliday junction branch migration complex subunit RuvA (196 aa).

A domain I region spans residues 1 to 64 (MIDRLRGQLV…EDAMLLFGFA (64 aa)). The segment at 65–143 (TREEREAFDA…AAAGGGGGVA (79 aa)) is domain II. Residues 144-153 (AGEGDGPFME) form a flexible linker region. The interval 153–196 (EAREALTGLGYSLEEAERALRDVPPQETVEQYIKAALRKIGGRR) is domain III.

Belongs to the RuvA family. In terms of assembly, homotetramer. Forms an RuvA(8)-RuvB(12)-Holliday junction (HJ) complex. HJ DNA is sandwiched between 2 RuvA tetramers; dsDNA enters through RuvA and exits via RuvB. An RuvB hexamer assembles on each DNA strand where it exits the tetramer. Each RuvB hexamer is contacted by two RuvA subunits (via domain III) on 2 adjacent RuvB subunits; this complex drives branch migration. In the full resolvosome a probable DNA-RuvA(4)-RuvB(12)-RuvC(2) complex forms which resolves the HJ.

It is found in the cytoplasm. Its function is as follows. The RuvA-RuvB-RuvC complex processes Holliday junction (HJ) DNA during genetic recombination and DNA repair, while the RuvA-RuvB complex plays an important role in the rescue of blocked DNA replication forks via replication fork reversal (RFR). RuvA specifically binds to HJ cruciform DNA, conferring on it an open structure. The RuvB hexamer acts as an ATP-dependent pump, pulling dsDNA into and through the RuvAB complex. HJ branch migration allows RuvC to scan DNA until it finds its consensus sequence, where it cleaves and resolves the cruciform DNA. In Rubrobacter xylanophilus (strain DSM 9941 / JCM 11954 / NBRC 16129 / PRD-1), this protein is Holliday junction branch migration complex subunit RuvA.